Here is a 217-residue protein sequence, read N- to C-terminus: Phosphatidylinositol phosphate synthase (217 aa).

2 helical membrane passes run 28-49 (LTPDVVTILGTTASVAGALTLF) and 55-74 (FAGACVVWFFVLFDMLDGAM). 31–34 (DVVT) is a binding site for a CDP-1,2-diacyl-sn-glycerol. Residues Asp-68 and Asp-71 each contribute to the Mg(2+) site. A CDP-1,2-diacyl-sn-glycerol is bound by residues Gly-72, Arg-76, and Thr-82. The Mg(2+) site is built by Asp-89 and Asp-93. The active-site Proton acceptor is Asp-93. Helical transmembrane passes span 95–112 (ISDGAVFCGLLWWIAFHM), 118–136 (VIATLICLVTSQVISYIKA), 156–173 (LIIVLTGAGVSDFPFVPW), and 179–200 (VGMWLLAVASVITCVQRLHTVW).

This sequence belongs to the CDP-alcohol phosphatidyltransferase class-I family. In terms of assembly, homodimer. It depends on Mg(2+) as a cofactor.

It localises to the cell membrane. It catalyses the reaction a CDP-1,2-diacyl-sn-glycerol + 1D-myo-inositol 3-phosphate = a 1,2-diacyl-sn-glycero-3-phospho-(1D-myo-inositol-3-phosphate) + CMP + H(+). The catalysed reaction is 1,2-di-(9Z-octadecenoyl)-sn-glycero-3-cytidine-5'-diphosphate + 1D-myo-inositol 3-phosphate = 1,2-di-(9Z-octadecenoyl)-sn-glycero-3-phospho-(1D-myo-inositol-3-phosphate) + CMP + H(+). It functions in the pathway phospholipid metabolism; phosphatidylinositol phosphate biosynthesis. Its activity is regulated as follows. Competitively inhibited by several inositol 1-phosphate analogs, including the phosphonate analog 1-deoxy-1-phosphonomethyl-myo-inositol (Ino-C-P). Its function is as follows. Catalyzes the conjugation of the 1'-hydroxyl group of D-myo-inositol-3-phosphate (also named L-myo-inositol-1-phosphate) with a lipid tail of cytidine diphosphate diacylglycerol (CDP-DAG), forming phosphatidylinositol phosphate (PIP) and CMP. PIP is a precursor of phosphatidylinositol (PI) which is an essential lipid for mycobacteria required for formation of their cell wall. This chain is Phosphatidylinositol phosphate synthase, found in Mycobacterium bovis (strain BCG / Pasteur 1173P2).